The sequence spans 93 residues: Large ribosomal subunit protein eL42 (93 aa).

Residues Cys11, Cys14, Cys72, and Cys75 each contribute to the Zn(2+) site. Residues 11–75 form a C4-type zinc finger; sequence CPHCHSHFEH…TDLKYRCSEC (65 aa).

It belongs to the eukaryotic ribosomal protein eL42 family. As to quaternary structure, part of the 50S ribosomal subunit. Zn(2+) serves as cofactor.

Binds to the 23S rRNA. The sequence is that of Large ribosomal subunit protein eL42 (rpl44e) from Natronomonas pharaonis (strain ATCC 35678 / DSM 2160 / CIP 103997 / JCM 8858 / NBRC 14720 / NCIMB 2260 / Gabara) (Halobacterium pharaonis).